A 388-amino-acid polypeptide reads, in one-letter code: T-cell surface glycoprotein CD1e, membrane-associated (388 aa).

Positions 1-19 (MLLLFLLFEGLCCPGENTA) are cleaved as a signal peptide. The propeptide at 20–31 (APQALQSYHLAA) is removed in sCD1e. N-linked (GlcNAc...) asparagine glycosylation is found at asparagine 47 and asparagine 84. One can recognise an Ig-like domain in the interval 191–301 (PRFLAGLMEA…LGGHDLIIHW (111 aa)). Residues cysteine 230 and cysteine 285 are joined by a disulfide bond. A helical membrane pass occupies residues 305-325 (SIFLILICLTVIVTLVILVVV).

As to quaternary structure, heterodimer with B2M (beta-2-microglobulin). The association with B2M appears to be facilitated by the presence of the propeptide. Mono-ubiquitinated. In terms of processing, proteolytically cleaved in late endosomes to yield a soluble form. Expressed on cortical thymocytes, dendritic cells, Langerhans cells, on certain T-cell leukemias, and in various other tissues.

It is found in the golgi apparatus membrane. The protein localises to the early endosome. Its subcellular location is the late endosome. It localises to the lysosome lumen. Functionally, T-cell surface glycoprotein CD1e, soluble binds diacetylated lipids, including phosphatidyl inositides and diacylated sulfoglycolipids, and is required for the presentation of glycolipid antigens on the cell surface. The membrane-associated form is not active. The polypeptide is T-cell surface glycoprotein CD1e, membrane-associated (CD1E) (Homo sapiens (Human)).